A 177-amino-acid polypeptide reads, in one-letter code: Putative peroxiredoxin (177 aa).

Residues 8–177 (TAKGNEIPDT…ASIDTILTKV (170 aa)) form the Thioredoxin domain. Cys64 functions as the Cysteine sulfenic acid (-SOH) intermediate in the catalytic mechanism. A Microbody targeting signal motif is present at residues 175–177 (TKV).

Belongs to the peroxiredoxin family. Prx5 subfamily. As to quaternary structure, homodimer; disulfide-linked, upon oxidation.

The enzyme catalyses a hydroperoxide + [thioredoxin]-dithiol = an alcohol + [thioredoxin]-disulfide + H2O. Thiol-specific peroxidase that catalyzes the reduction of hydrogen peroxide and organic hydroperoxides to water and alcohols, respectively. Plays a role in cell protection against oxidative stress by detoxifying peroxides and as sensor of hydrogen peroxide-mediated signaling events. The sequence is that of Putative peroxiredoxin from Malassezia furfur (Pityriasis versicolor infection agent).